A 630-amino-acid polypeptide reads, in one-letter code: 1,4-alpha-glucan branching enzyme GlgB (630 aa).

D311 serves as the catalytic Nucleophile. The active-site Proton donor is the E362.

This sequence belongs to the glycosyl hydrolase 13 family. GlgB subfamily. In terms of assembly, monomer.

The enzyme catalyses Transfers a segment of a (1-&gt;4)-alpha-D-glucan chain to a primary hydroxy group in a similar glucan chain.. It functions in the pathway glycan biosynthesis; glycogen biosynthesis. Catalyzes the formation of the alpha-1,6-glucosidic linkages in glycogen by scission of a 1,4-alpha-linked oligosaccharide from growing alpha-1,4-glucan chains and the subsequent attachment of the oligosaccharide to the alpha-1,6 position. This Aquifex aeolicus (strain VF5) protein is 1,4-alpha-glucan branching enzyme GlgB.